The chain runs to 22 residues: Mu-conotoxin SxIIIA (22 aa).

3 cysteine pairs are disulfide-bonded: cysteine 2-cysteine 15, cysteine 3-cysteine 20, and cysteine 10-cysteine 21. Alanine 22 is modified (alanine amide).

Belongs to the conotoxin M superfamily. In terms of tissue distribution, expressed by the venom duct.

The protein resides in the secreted. Mu-conotoxins block voltage-gated sodium channels (Nav). This synthetic toxin potently blocks rNav1.4/SCN4A (IC(50)= 7 nM). It also moderately blocks rNav1.1/SCN1A (IC(50)=370 nM), rNav1.2/SCN2A (IC(50)=1 uM), and mNav1.6/SCN6A (IC(50)=570 nM). It is noteworthy that coexpression of subunits beta-2 or beta-4 (but not beta-1 or beta-3) decrease by more that 10-fold the binding potency of the toxin to rNav1.6. It is also noteworthy that the toxin is 50-fold more potent on mouse Nav1.6 than on rat Nav1.6. In vivo, when injected intraperitoneally or subcutaneously in mice, causes motor impairment, paralysis and death. In Conus striolatus (Cone snail), this protein is Mu-conotoxin SxIIIA.